A 1051-amino-acid chain; its full sequence is MEPWVPQTQGRTTGPSRDTNRGLQSGHYRPRLHSQYSGDKYHQWQDAHKNSKSQQDLRDDHQQSHSVSRSGEWSQPVSGADYLKGSYPSHLYSRSGYGDPYQRYHTPTPRDEYAYGNYYYHGHPQLLPEERVARQGSPYIWHEDHGDQRYFGEHHREKHNGTFGANSDTQFQFTSKNPYRDSPASVSGQEQPGEFFPESEAQKQKPLLTSKSSLLQQHESGLSSSSYELSQYMTAAPEEYEPMVSAAWRPIQADDTSATVPKAPMRFYVPHVSVSFGPGGQLVCVPPNSPADGQTALVEVHSMEVLLNDFEDQEEMRAFPGPLIREDIHKVDIMTFCQQKATQCLKSETPGSRDSALLWQLLVLLCRQNGSMVGSDIAELLMQDCKKLEKYKRQPPVANLINLTDEDWPVLSSGTRDLLTGEIPPNVDTPAQIVEKFTKLLYYGRKKEALEWAMKNHLWGHALFLASKMDPRTYNWVMSGFTSTLALNDPLQTLFQLMSGRIPQAATVCGDKQWGDWRPHLAVILSNQAGDTELYQRAIVSMGDTLAGKGLVEASHFCYLMAHVPFGHYTVKTDHLALVGSSHSQEFMKFATIEAIQRTEIFEYCQMLGRPKSFIPSFQVYKLLYASRLADYGLASQALHYCEAIGAAVLSQEGSSHPVLLAELIKLAEKLKLSDPLVLERRRGDRDLEPDWLVQLRRKHKDLEQNRTGAPRDPDSTPSDIYGAGGTTDTPYPDLSGHQNYSEDSEYSSTLWSTAEQTSLTNPLAQQSFPLQRDTYSGHMGTPVPLYSVPATHLAVTSGASGSSVAVTGTPGGRVGEDMLRTHPAFGENTMTQEPLEDPDGLEVISSLQTPAAPRVPSFSEDSAASAKEDEEGSSDGADKPSHPDASQKGKLGDGKNTKSSGFGWFSWFRSKPASSVSTSGDEDSSDSSDSEESPRASSPHHASPGLSPTPPLTSPSLPGASTFSRGTGGSILQGSSNSSGIAEGMGIGGFSGTQGVSSEFYSQPGALPPPPTLQGAVPLYNPSQVPQLPTASSLNRPNRLAQRRYPTQPC.

Polar residues predominate over residues 1-23 (MEPWVPQTQGRTTGPSRDTNRGL). Positions 1-109 (MEPWVPQTQG…PYQRYHTPTP (109 aa)) are disordered. The segment covering 39–63 (DKYHQWQDAHKNSKSQQDLRDDHQQ) has biased composition (basic and acidic residues). The span at 64 to 77 (SHSVSRSGEWSQPV) shows a compositional bias: polar residues. A phosphoserine mark is found at S70 and S137. Positions 157–203 (EKHNGTFGANSDTQFQFTSKNPYRDSPASVSGQEQPGEFFPESEAQK) are disordered. Positions 163–177 (FGANSDTQFQFTSKN) are enriched in polar residues. Phosphoserine is present on residues S182, S185, and S245. Residues 263–708 (APMRFYVPHV…KHKDLEQNRT (446 aa)) form a central conserved domain (CCD); required for localization to endoplasmic reticulum exit sites region. Residues 703–715 (LEQNRTGAPRDPD) show a composition bias toward basic and acidic residues. 3 disordered regions span residues 703–754 (LEQN…LWST), 798–820 (SGAS…EDML), and 850–1051 (TPAA…TQPC). Positions 737-754 (GHQNYSEDSEYSSTLWST) are enriched in polar residues. Over residues 798–809 (SGASGSSVAVTG) the composition is skewed to low complexity. T850 is modified (phosphothreonine). 5 positions are modified to phosphoserine: S860, S863, S866, S874, and S875. Over residues 877–897 (GADKPSHPDASQKGKLGDGKN) the composition is skewed to basic and acidic residues. Over residues 900-920 (SSGFGWFSWFRSKPASSVSTS) the composition is skewed to low complexity. Residues 921–932 (GDEDSSDSSDSE) are compositionally biased toward acidic residues. Positions 936 to 947 (RASSPHHASPGL) are enriched in low complexity. The span at 984 to 993 (EGMGIGGFSG) shows a compositional bias: gly residues. Residues 1022 to 1037 (NPSQVPQLPTASSLNR) are compositionally biased toward polar residues.

The protein belongs to the SEC16 family. SEC16A and SEC16B are each present in multiple copies in a heteromeric complex. Interacts with TFG. Interacts with SEC13. In terms of tissue distribution, liver.

It localises to the endoplasmic reticulum membrane. It is found in the golgi apparatus membrane. Its function is as follows. Plays a role in the organization of the endoplasmic reticulum exit sites (ERES), also known as transitional endoplasmic reticulum (tER). Required for secretory cargo traffic from the endoplasmic reticulum to the Golgi apparatus. Involved in peroxisome biogenesis. Regulates the transport of peroxisomal biogenesis factors PEX3 and PEX16 from the ER to peroxisomes. The polypeptide is Protein transport protein Sec16B (Sec16b) (Mus musculus (Mouse)).